We begin with the raw amino-acid sequence, 151 residues long: 3-hydroxyacyl-[acyl-carrier-protein] dehydratase FabZ (151 aa).

H49 is a catalytic residue.

This sequence belongs to the thioester dehydratase family. FabZ subfamily.

It localises to the cytoplasm. It carries out the reaction a (3R)-hydroxyacyl-[ACP] = a (2E)-enoyl-[ACP] + H2O. Its function is as follows. Involved in unsaturated fatty acids biosynthesis. Catalyzes the dehydration of short chain beta-hydroxyacyl-ACPs and long chain saturated and unsaturated beta-hydroxyacyl-ACPs. The sequence is that of 3-hydroxyacyl-[acyl-carrier-protein] dehydratase FabZ from Bordetella bronchiseptica (strain ATCC BAA-588 / NCTC 13252 / RB50) (Alcaligenes bronchisepticus).